Reading from the N-terminus, the 504-residue chain is Maturase K (504 aa).

It belongs to the intron maturase 2 family. MatK subfamily.

It localises to the plastid. Its subcellular location is the chloroplast. Its function is as follows. Usually encoded in the trnK tRNA gene intron. Probably assists in splicing its own and other chloroplast group II introns. The sequence is that of Maturase K from Mentzelia laevicaulis (Blazing star).